The chain runs to 174 residues: von Hippel-Lindau tumor suppressor homolog (174 aa).

Belongs to the VHL family. In terms of assembly, interacts with hif-1 (hydroxylated on 'Pro-621'); the interaction induces hif-1 degradation. May be a component of the cullin E3 ubiquitin ligase complex.

The protein operates within protein modification; protein ubiquitination. In terms of biological role, involved in the response to variation in environmental oxygen levels by targeting the hypoxia-inducible transcription factor hif-1 for proteasomal degradation when oxygen levels are normal (around 20%). By regulating hif-1 expression, plays a role in iron homeostasis, aging, heat acclimation and progeny size. Mediates resistance to enteropathogenic E.coli. Mediates susceptibility to B.thuringiensis pore-forming toxins. Not involved in P.aeruginosa susceptibility. In Caenorhabditis elegans, this protein is von Hippel-Lindau tumor suppressor homolog.